An 875-amino-acid chain; its full sequence is Serine/threonine-protein phosphatase 4 regulatory subunit 4 (875 aa).

HEAT repeat units follow at residues 215-253 and 254-292; these read ILPLVKSLCQDVEYEVRSCMCRQLENIAQGIGAELTKNV and VLPELIELSRDESGSVRLAAFETLVNMLDMFDTDDRSQT. Residues 686–730 adopt a coiled-coil conformation; it reads MFQKKNYEKDLLDQEKEREELLFLEMEQLEKEKHQSDGRLASDKS. The segment covering 718–739 has biased composition (basic and acidic residues); that stretch reads KHQSDGRLASDKSFEKKRRDSR. Positions 718 to 773 are disordered; the sequence is KHQSDGRLASDKSFEKKRRDSRTSTQSLSKNLPISVPGPSSSTASTSKEIKKSKLT. Residues 740-764 show a composition bias toward polar residues; that stretch reads TSTQSLSKNLPISVPGPSSSTASTS. Ser777 is modified (phosphoserine). At Thr799 the chain carries Phosphothreonine. Polar residues predominate over residues 825–859; that stretch reads RNASSVPASFSPNPVMPSTSRGPGNTADPKSSGSK. Residues 825-875 are disordered; the sequence is RNASSVPASFSPNPVMPSTSRGPGNTADPKSSGSKDAQPRKATLKSRKSNP. Residues 866 to 875 are compositionally biased toward basic residues; sequence ATLKSRKSNP.

As to quaternary structure, serine/threonine-protein phosphatase 4 (PP4) occurs in different assemblies of the catalytic and one or more regulatory subunits. Component of the PP4 complex PPP4C-PPP4R4.

It is found in the cytoplasm. Its function is as follows. Putative regulatory subunit of serine/threonine-protein phosphatase 4. The polypeptide is Serine/threonine-protein phosphatase 4 regulatory subunit 4 (Ppp4r4) (Mus musculus (Mouse)).